Here is a 200-residue protein sequence, read N- to C-terminus: Methylthioribulose-1-phosphate dehydratase (200 aa).

Residues histidine 90 and histidine 92 each contribute to the Zn(2+) site.

It belongs to the aldolase class II family. MtnB subfamily. Zn(2+) serves as cofactor.

It catalyses the reaction 5-(methylsulfanyl)-D-ribulose 1-phosphate = 5-methylsulfanyl-2,3-dioxopentyl phosphate + H2O. The protein operates within amino-acid biosynthesis; L-methionine biosynthesis via salvage pathway; L-methionine from S-methyl-5-thio-alpha-D-ribose 1-phosphate: step 2/6. Its function is as follows. Catalyzes the dehydration of methylthioribulose-1-phosphate (MTRu-1-P) into 2,3-diketo-5-methylthiopentyl-1-phosphate (DK-MTP-1-P). The protein is Methylthioribulose-1-phosphate dehydratase of Sodalis glossinidius (strain morsitans).